The following is a 465-amino-acid chain: GDNF family receptor alpha-2 (465 aa).

Positions 1–21 (MILANAFCIVLFVDETLRSLA) are cleaved as a signal peptide. Disulfide bonds link Cys40–Cys93, Cys47–Cys53, Cys63–Cys78, Cys95–Cys105, Cys159–Cys220, Cys166–Cys172, Cys183–Cys198, Cys193–Cys239, Cys222–Cys227, Cys249–Cys321, Cys256–Cys262, Cys273–Cys291, Cys283–Cys345, and Cys323–Cys333. Residues Asn355, Asn387, and Asn412 are each glycosylated (N-linked (GlcNAc...) asparagine). Residue Ser445 is the site of GPI-anchor amidated serine attachment. The propeptide at 446–465 (RHRAARILPAVPIVLLKLLL) is removed in mature form.

This sequence belongs to the GDNFR family. In terms of assembly, interacts with NRTN ligand and RET: forms a 2:2:2 ternary complex composed of NRTN ligand, GFRA2 and RET receptor.

It is found in the cell membrane. In terms of biological role, receptor for neurturin (NRTN), a growth factor that supports the survival of sympathetic neurons. NRTN-binding leads to autophosphorylation and activation of the RET receptor. This chain is GDNF family receptor alpha-2 (GFRA2), found in Gallus gallus (Chicken).